Here is a 136-residue protein sequence, read N- to C-terminus: UPF0216 protein PF0452 (136 aa).

The protein belongs to the UPF0216 family.

In Pyrococcus furiosus (strain ATCC 43587 / DSM 3638 / JCM 8422 / Vc1), this protein is UPF0216 protein PF0452.